A 341-amino-acid chain; its full sequence is DNA-directed RNA polymerase subunit alpha (341 aa).

The segment at 1–226 (MLIAQRPTIT…ELFGLVRELN (226 aa)) is alpha N-terminal domain (alpha-NTD). Residues 241–341 (AALAADLALP…DQRYIETEQL (101 aa)) form an alpha C-terminal domain (alpha-CTD) region.

The protein belongs to the RNA polymerase alpha chain family. In terms of assembly, homodimer. The RNAP catalytic core consists of 2 alpha, 1 beta, 1 beta' and 1 omega subunit. When a sigma factor is associated with the core the holoenzyme is formed, which can initiate transcription.

The catalysed reaction is RNA(n) + a ribonucleoside 5'-triphosphate = RNA(n+1) + diphosphate. Its function is as follows. DNA-dependent RNA polymerase catalyzes the transcription of DNA into RNA using the four ribonucleoside triphosphates as substrates. This chain is DNA-directed RNA polymerase subunit alpha, found in Acidothermus cellulolyticus (strain ATCC 43068 / DSM 8971 / 11B).